The sequence spans 256 residues: MKIITCYKCVPDEQDIAINNADGTLDFSKADSKISQYDLNAIEAACQLKQQLGDAQVVAMSVGGKALTNAKGRKDVLSRGPDELIVVIDDQFEQALPQQTASALAAAAQKSGFDLLICGDGSSDLYAQQVGLLVGEALNIPAINGVSKILSLTDSTLTVERELEDEVETLSIPLPAVIAVSTDINTPQIPSMKAILGAAKKPVQVWSPADIGLNSVPAYSAQQVAAPKQRERQRVVIEGDGEEQIAAFVENLRKII.

This sequence belongs to the ETF beta-subunit/FixA family. Heterodimer of FixA and FixB.

It participates in amine and polyamine metabolism; carnitine metabolism. Required for anaerobic carnitine reduction. May bring reductant to CaiA. The polypeptide is Protein FixA (Salmonella agona (strain SL483)).